Here is a 373-residue protein sequence, read N- to C-terminus: Dual-specificity RNA methyltransferase RlmN (373 aa).

Catalysis depends on glutamate 104, which acts as the Proton acceptor. Residues lysine 110–aspartate 349 enclose the Radical SAM core domain. An intrachain disulfide couples cysteine 117 to cysteine 354. [4Fe-4S] cluster contacts are provided by cysteine 124, cysteine 128, and cysteine 131. S-adenosyl-L-methionine-binding positions include glycine 178–glutamate 179, serine 210, serine 232–histidine 234, and asparagine 311. The active-site S-methylcysteine intermediate is cysteine 354.

The protein belongs to the radical SAM superfamily. RlmN family. The cofactor is [4Fe-4S] cluster.

It is found in the cytoplasm. The enzyme catalyses adenosine(2503) in 23S rRNA + 2 reduced [2Fe-2S]-[ferredoxin] + 2 S-adenosyl-L-methionine = 2-methyladenosine(2503) in 23S rRNA + 5'-deoxyadenosine + L-methionine + 2 oxidized [2Fe-2S]-[ferredoxin] + S-adenosyl-L-homocysteine. The catalysed reaction is adenosine(37) in tRNA + 2 reduced [2Fe-2S]-[ferredoxin] + 2 S-adenosyl-L-methionine = 2-methyladenosine(37) in tRNA + 5'-deoxyadenosine + L-methionine + 2 oxidized [2Fe-2S]-[ferredoxin] + S-adenosyl-L-homocysteine. In terms of biological role, specifically methylates position 2 of adenine 2503 in 23S rRNA and position 2 of adenine 37 in tRNAs. m2A2503 modification seems to play a crucial role in the proofreading step occurring at the peptidyl transferase center and thus would serve to optimize ribosomal fidelity. This is Dual-specificity RNA methyltransferase RlmN from Buchnera aphidicola subsp. Baizongia pistaciae (strain Bp).